Here is an 811-residue protein sequence, read N- to C-terminus: TLR4 interactor with leucine rich repeats (811 aa).

Positions 1-25 (MEGVGAVRFWLVVCGCLAFPPRAES) are cleaved as a signal peptide. Positions 26–57 (VCPERCDCQHPQHLLCTNRGLRAVPKTSSLPS) constitute an LRRNT domain. The Extracellular segment spans residues 26–696 (VCPERCDCQH…AGGRGGVDYQ (671 aa)). LRR repeat units lie at residues 61 to 81 (VLTY…DFHR), 84 to 105 (QLRR…TFEK), 108 to 129 (RLEE…TLAP), 132 to 153 (KLRI…SFEG), 156 to 177 (SLVK…VFAP), 180 to 201 (NLLY…AFTQ), 204 to 223 (KLRF…RHAA), 230 to 251 (SLST…VFQH), 254 to 275 (RLGL…AFWG), 278 to 298 (ALRE…TLLE), 302 to 323 (SLEA…TFGH), and 326 to 347 (RLRE…IFAA). A glycan (N-linked (GlcNAc...) asparagine) is linked at Asn-73. The LRRCT domain maps to 359 to 416 (NGWTCDCRLRGLKRWMGNWHSQGRLLTVFVQCRHPPALRGKYLDYLDDQLLQNGSCVD). N-linked (GlcNAc...) asparagine glycosylation is present at Asn-411. 2 disordered regions span residues 414–460 (CVDP…QQRG) and 486–562 (RRGP…QQGR). The span at 421–430 (PTAGSRQWPI) shows a compositional bias: polar residues. Composition is skewed to low complexity over residues 440 to 460 (PPAG…QQRG) and 494 to 508 (QSPS…APQS). Residues 510–519 (DLHEKPERGR) show a composition bias toward basic and acidic residues. Polar residues predominate over residues 524–545 (NLPQTEPTPTSEPASGTPSARD). The N-linked (GlcNAc...) asparagine glycan is linked to Asn-589. Residues 697 to 717 (LLTLVLLAINALLVLLALAAW) form a helical membrane-spanning segment. Over 718 to 809 (GSRWLRRKLR…RREDHLLQRF (92 aa)) the chain is Cytoplasmic. Residue Ser-798 is modified to Phosphoserine.

Belongs to the lipopolysaccharide (LPS) receptor, a multi-protein complex containing at least CD14, MD-2 and TLR4. Interacts with TLR4; this interaction is greatly enhanced following LPS stimulation. Interacts with LPS. N-glycolysaled. In terms of tissue distribution, highly expressed in cortical astrocytes and in cerebellar granule neurons.

It is found in the membrane. Component of the TLR4 signaling complex. Mediates the innate immune response to bacterial lipopolysaccharide (LPS) leading to cytokine secretion and the inflammatory response. This chain is TLR4 interactor with leucine rich repeats (Tril), found in Rattus norvegicus (Rat).